We begin with the raw amino-acid sequence, 600 residues long: Aspartate--tRNA(Asp/Asn) ligase (600 aa).

Glutamate 174 provides a ligand contact to L-aspartate. Residues 198 to 201 form an aspartate region; that stretch reads QLFK. L-aspartate is bound at residue arginine 220. ATP contacts are provided by residues 220–222 and glutamine 229; that span reads RDE. Histidine 457 lines the L-aspartate pocket. An ATP-binding site is contributed by glutamate 491. Residue arginine 498 participates in L-aspartate binding. Residue 543 to 546 participates in ATP binding; the sequence is GLDR.

The protein belongs to the class-II aminoacyl-tRNA synthetase family. Type 1 subfamily. As to quaternary structure, homodimer.

Its subcellular location is the cytoplasm. It carries out the reaction tRNA(Asx) + L-aspartate + ATP = L-aspartyl-tRNA(Asx) + AMP + diphosphate. In terms of biological role, aspartyl-tRNA synthetase with relaxed tRNA specificity since it is able to aspartylate not only its cognate tRNA(Asp) but also tRNA(Asn). Reaction proceeds in two steps: L-aspartate is first activated by ATP to form Asp-AMP and then transferred to the acceptor end of tRNA(Asp/Asn). This chain is Aspartate--tRNA(Asp/Asn) ligase, found in Burkholderia mallei (strain NCTC 10247).